The chain runs to 123 residues: Large ribosomal subunit protein bL12 (123 aa).

Belongs to the bacterial ribosomal protein bL12 family. In terms of assembly, homodimer. Part of the ribosomal stalk of the 50S ribosomal subunit. Forms a multimeric L10(L12)X complex, where L10 forms an elongated spine to which 2 to 4 L12 dimers bind in a sequential fashion. Binds GTP-bound translation factors.

Forms part of the ribosomal stalk which helps the ribosome interact with GTP-bound translation factors. Is thus essential for accurate translation. The polypeptide is Large ribosomal subunit protein bL12 (Chromobacterium violaceum (strain ATCC 12472 / DSM 30191 / JCM 1249 / CCUG 213 / NBRC 12614 / NCIMB 9131 / NCTC 9757 / MK)).